Reading from the N-terminus, the 2646-residue chain is Probable helicase senataxin (2646 aa).

At Ser102 the chain carries Phosphoserine. Lys339 participates in a covalent cross-link: Glycyl lysine isopeptide (Lys-Gly) (interchain with G-Cter in SUMO1). Phosphoserine is present on Ser640. Disordered regions lie at residues 705–734 (KISA…WGCD) and 825–876 (GGAL…DDED). Over residues 714–727 (ESSSYAPSNSTSRN) the composition is skewed to polar residues. Residues 867 to 876 (LDNSSSDDED) show a composition bias toward acidic residues. Ser870, Ser871, Ser872, Ser938, Ser1002, and Ser1004 each carry phosphoserine. The tract at residues 1001–1023 (ISDSDEEEDEDEDERSSSEENIK) is disordered. Residues 1003 to 1014 (DSDEEEDEDEDE) show a composition bias toward acidic residues. A Glycyl lysine isopeptide (Lys-Gly) (interchain with G-Cter in SUMO2) cross-link involves residue Lys1051. Over residues 1122–1133 (RNKAEGVKEHAG) the composition is skewed to basic and acidic residues. The interval 1122–1245 (RNKAEGVKEH…DTRRGQSKSS (124 aa)) is disordered. Basic residues predominate over residues 1147 to 1156 (GVKKPKRKRY). The segment covering 1176–1189 (LPDRRDLTESDLKS) has biased composition (basic and acidic residues). Positions 1196–1211 (TPSSSVERDSTILQKS) are enriched in polar residues. Over residues 1212–1222 (TKSRTHSKPVR) the composition is skewed to basic residues. Ser1318 carries the post-translational modification Phosphoserine. Residues Lys1328, Lys1329, and Lys1398 each participate in a glycyl lysine isopeptide (Lys-Gly) (interchain with G-Cter in SUMO2) cross-link. Ser1472 is subject to Phosphoserine. Residue Thr1474 is modified to Phosphothreonine. Residues 1591-1627 (LSKSLESTTLQQSALKNKSSGAQPNLKVTPPSSMGSQ) are disordered. Positions 1595-1613 (LESTTLQQSALKNKSSGAQ) are enriched in polar residues. 1939-1946 (GPPGTGKS) is a binding site for ATP. The Bipartite nuclear localization signal signature appears at 2046–2063 (KKDLPSHIQEMLRRKEIL). Thr2450 is modified (phosphothreonine). Disordered regions lie at residues 2450–2472 (THPP…NRLD), 2486–2506 (HTPS…QDRL), and 2569–2624 (SHRS…THHV). Composition is skewed to basic and acidic residues over residues 2496–2506 (GPERPLLQDRL) and 2593–2608 (KYSD…REPR). Residues 2632 to 2646 (RRRLDDSSAKRRQFL) form a necessary for nuclear localization region.

It belongs to the DNA2/NAM7 helicase family. In terms of assembly, homodimer. Interacts with PER2; the interaction inhibits termination of circadian target genes. Interacts with CHD4, POLR2A, PRKDC and TRIM28. Interacts with UBE2I. Interacts (via N-terminus domain) with EXOSC9 (via C-terminus region); the interaction enhances SETX sumoylation. Interacts with NCL (via N-terminus domain). Interacts with PABPN1, PABPC1 and SF3B1. Interacts with SMN1/SMN2 and POLR2A; SMN1/SMN2 recruits SETX to POLR2A. Post-translationally, ubiquitinated. In terms of processing, sumoylated preferentially with SUMO2 or SUMO3. In terms of tissue distribution, expressed in cerebellum, hippocampus, olfactory bulb, Bergmann glial fibers, stellate cells and Purkinje cells. Expressed in the epithelial cells of the lens but not in mature lens fiber cells. Expressed in the retina (highly expressed in inner and outer segments of photoreceptors and outer plexiform layer cells but weakly expressed in the inner plexiform and ganglion cell layers). Expressed in the kidney.

The protein localises to the nucleus. It is found in the nucleoplasm. The protein resides in the nucleolus. Its subcellular location is the cytoplasm. It localises to the chromosome. The protein localises to the telomere. It is found in the cell projection. The protein resides in the axon. Its subcellular location is the growth cone. Functionally, probable RNA/DNA helicase involved in diverse aspects of RNA metabolism and genomic integrity. Plays a role in transcription regulation by its ability to modulate RNA Polymerase II (Pol II) binding to chromatin and through its interaction with proteins involved in transcription. Contributes to the mRNA splicing efficiency and splice site selection. Required for the resolution of R-loop RNA-DNA hybrid formation at G-rich pause sites located downstream of the poly(A) site, allowing XRN2 recruitment and XRN2-mediated degradation of the downstream cleaved RNA and hence efficient RNA polymerase II (RNAp II) transcription termination. Required for the 3' transcriptional termination of PER1 and CRY2, thus playing an important role in the circadian rhythm regulation. Involved in DNA double-strand breaks damage response generated by oxidative stress. In association with RRP45, targets the RNA exosome complex to sites of transcription-induced DNA damage. Plays a role in the development and maturation of germ cells: essential for male meiosis, acting at the interface of transcription and meiotic recombination, and in the process of gene silencing during meiotic sex chromosome inactivation (MSCI). Plays a role in neurite outgrowth in hippocampal cells through FGF8-activated signaling pathways. Inhibits retinoic acid-induced apoptosis. May be involved in telomeric stability through the regulation of telomere repeat-containing RNA (TERRA) transcription. The sequence is that of Probable helicase senataxin from Mus musculus (Mouse).